A 442-amino-acid chain; its full sequence is FBD-associated F-box protein At1g66310 (442 aa).

The F-box domain maps to 18–64; the sequence is VDWLRDLPESLLCHILLNLPTKDVVKTSVLSSKWRNLWRLVPGLDLD. The FBD domain occupies 363–415; that stretch reads KRRTSVLSGPRRLLSSLEYVEIESPLTGEVFEMKLVSYLLENSPILKKLTINL.

The polypeptide is FBD-associated F-box protein At1g66310 (Arabidopsis thaliana (Mouse-ear cress)).